The primary structure comprises 569 residues: Formate hydrogenlyase subunit 5 (569 aa).

Positions 538 to 569 (MTVVDVRKKKSKVVPYKELERYSIERKNSPLK) are excised as a propeptide.

Belongs to the complex I 49 kDa subunit family. In terms of assembly, FHL comprises of a formate dehydrogenase, unidentified electron carriers and a hydrogenase (isoenzyme 3). In this non-energy conserving pathway molecular hydrogen and carbodioxide from formate are released. [4Fe-4S] cluster serves as cofactor. The cofactor is Ni(2+).

The polypeptide is Formate hydrogenlyase subunit 5 (hycE) (Escherichia coli (strain K12)).